A 173-amino-acid polypeptide reads, in one-letter code: Lipoprotein signal peptidase (173 aa).

Helical transmembrane passes span phenylalanine 11–threonine 31, threonine 69–methionine 89, and glutamine 93–valine 113. Catalysis depends on residues aspartate 123 and aspartate 142. A helical transmembrane segment spans residues proline 134 to alanine 154.

Belongs to the peptidase A8 family.

It is found in the cell inner membrane. It carries out the reaction Release of signal peptides from bacterial membrane prolipoproteins. Hydrolyzes -Xaa-Yaa-Zaa-|-(S,diacylglyceryl)Cys-, in which Xaa is hydrophobic (preferably Leu), and Yaa (Ala or Ser) and Zaa (Gly or Ala) have small, neutral side chains.. It functions in the pathway protein modification; lipoprotein biosynthesis (signal peptide cleavage). Its function is as follows. This protein specifically catalyzes the removal of signal peptides from prolipoproteins. This chain is Lipoprotein signal peptidase, found in Sphingopyxis alaskensis (strain DSM 13593 / LMG 18877 / RB2256) (Sphingomonas alaskensis).